A 376-amino-acid polypeptide reads, in one-letter code: Lipoyl synthase, mitochondrial (376 aa).

Residues Cys-102, Cys-107, Cys-113, Cys-133, Cys-137, Cys-140, and Ser-348 each coordinate [4Fe-4S] cluster. The Radical SAM core domain maps to 116–337 (GGEDKTATAT…EEVGGEMGFA (222 aa)).

The protein belongs to the radical SAM superfamily. Lipoyl synthase family. Requires [4Fe-4S] cluster as cofactor.

The protein resides in the mitochondrion. The enzyme catalyses [[Fe-S] cluster scaffold protein carrying a second [4Fe-4S](2+) cluster] + N(6)-octanoyl-L-lysyl-[protein] + 2 oxidized [2Fe-2S]-[ferredoxin] + 2 S-adenosyl-L-methionine + 4 H(+) = [[Fe-S] cluster scaffold protein] + N(6)-[(R)-dihydrolipoyl]-L-lysyl-[protein] + 4 Fe(3+) + 2 hydrogen sulfide + 2 5'-deoxyadenosine + 2 L-methionine + 2 reduced [2Fe-2S]-[ferredoxin]. It participates in protein modification; protein lipoylation via endogenous pathway; protein N(6)-(lipoyl)lysine from octanoyl-[acyl-carrier-protein]: step 2/2. Catalyzes the radical-mediated insertion of two sulfur atoms into the C-6 and C-8 positions of the octanoyl moiety bound to the lipoyl domains of lipoate-dependent enzymes, thereby converting the octanoylated domains into lipoylated derivatives. The chain is Lipoyl synthase, mitochondrial from Branchiostoma floridae (Florida lancelet).